We begin with the raw amino-acid sequence, 238 residues long: ATP synthase subunit a (238 aa).

The next 5 membrane-spanning stretches (helical) occupy residues 18–38, 76–96, 114–134, 166–186, and 193–213; these read LTLL…VFWA, YSLL…LGLF, NLAF…IEGI, SLAI…GLIV, and LYWW…SIFI.

This sequence belongs to the ATPase A chain family. As to quaternary structure, F-type ATPases have 2 components, CF(1) - the catalytic core - and CF(0) - the membrane proton channel. CF(1) has five subunits: alpha(3), beta(3), gamma(1), delta(1), epsilon(1). CF(0) has three main subunits: a(1), b(2) and c(9-12). The alpha and beta chains form an alternating ring which encloses part of the gamma chain. CF(1) is attached to CF(0) by a central stalk formed by the gamma and epsilon chains, while a peripheral stalk is formed by the delta and b chains.

It localises to the cell membrane. Its function is as follows. Key component of the proton channel; it plays a direct role in the translocation of protons across the membrane. This is ATP synthase subunit a from Streptococcus equi subsp. zooepidemicus (strain H70).